Reading from the N-terminus, the 534-residue chain is CTP synthase (534 aa).

An amidoligase domain region spans residues 1–265; the sequence is MKYIVVTGGV…TTRLMKHLKL (265 aa). Serine 12 serves as a coordination point for CTP. Serine 12 is a binding site for UTP. 13 to 18 lines the ATP pocket; the sequence is GLGKGI. Residue tyrosine 53 participates in L-glutamine binding. Position 70 (aspartate 70) interacts with ATP. Residues aspartate 70 and glutamate 140 each coordinate Mg(2+). Residues 147–149, 186–191, and lysine 222 each bind CTP; these read DIE and KTKPSQ. UTP-binding positions include 186–191 and lysine 222; that span reads KTKPSQ. The region spanning 289-530 is the Glutamine amidotransferase type-1 domain; that stretch reads KLAIVGKYTN…VRAMCKYNKE (242 aa). Glycine 352 is a binding site for L-glutamine. Cysteine 379 functions as the Nucleophile; for glutamine hydrolysis in the catalytic mechanism. Residues 380–383, glutamate 403, and arginine 460 each bind L-glutamine; that span reads LGMQ. Catalysis depends on residues histidine 503 and glutamate 505.

It belongs to the CTP synthase family. Homotetramer.

It catalyses the reaction UTP + L-glutamine + ATP + H2O = CTP + L-glutamate + ADP + phosphate + 2 H(+). The enzyme catalyses L-glutamine + H2O = L-glutamate + NH4(+). The catalysed reaction is UTP + NH4(+) + ATP = CTP + ADP + phosphate + 2 H(+). The protein operates within pyrimidine metabolism; CTP biosynthesis via de novo pathway; CTP from UDP: step 2/2. With respect to regulation, allosterically activated by GTP, when glutamine is the substrate; GTP has no effect on the reaction when ammonia is the substrate. The allosteric effector GTP functions by stabilizing the protein conformation that binds the tetrahedral intermediate(s) formed during glutamine hydrolysis. Inhibited by the product CTP, via allosteric rather than competitive inhibition. In terms of biological role, catalyzes the ATP-dependent amination of UTP to CTP with either L-glutamine or ammonia as the source of nitrogen. Regulates intracellular CTP levels through interactions with the four ribonucleotide triphosphates. This chain is CTP synthase, found in Methanosarcina acetivorans (strain ATCC 35395 / DSM 2834 / JCM 12185 / C2A).